A 231-amino-acid polypeptide reads, in one-letter code: Modulator of macroautophagy TMEM150B-B (231 aa).

M1 is a topological domain (cytoplasmic). The chain crosses the membrane as a helical span at residues 2–22 (WAWALLPICLTVWATGGIWIV). The Extracellular portion of the chain corresponds to 23-50 (YAMSVSNGSVNLSDGFPYISVSGTYPPQ). 2 N-linked (GlcNAc...) asparagine glycosylation sites follow: N29 and N33. Residues 51 to 71 (SCVFGQVLNVGAMLAVWISVI) traverse the membrane as a helical segment. The Cytoplasmic segment spans residues 72-83 (RFQQIRDYNCHS). Residues 84-104 (VLNSVSLATGILCALGTSIVG) traverse the membrane as a helical segment. At 105 to 115 (NFQQSNQLQTH) the chain is on the extracellular side. Residues 116 to 136 (LAGAFLAFIIGNVYFWMQTAL) traverse the membrane as a helical segment. Topologically, residues 137–150 (TYMVKPKHGGCYIG) are cytoplasmic. A helical membrane pass occupies residues 151–171 (PIRFCLSIACTALIVAMAVFL). At 172–183 (KMNMKSVSAICE) the chain is on the extracellular side. A helical transmembrane segment spans residues 184 to 204 (WIVAMILFLLYGLFAVDFWHL). The Cytoplasmic segment spans residues 205–231 (DGHFFHVKKRRTVIPNEMEVSTVTLSI).

The protein belongs to the DRAM/TMEM150 family.

It is found in the cell membrane. It localises to the endosome membrane. The protein resides in the cytoplasmic vesicle. The protein localises to the autophagosome membrane. In terms of biological role, modulator of macroautophagy that causes accumulation of autophagosomes under basal conditions and enhances autophagic flux. Represses cell death and promotes long-term clonogenic survival of cells grown in the absence of glucose in a macroautophagy-independent manner. May have some role in extracellular matrix engulfment or growth factor receptor recycling, both of which can modulate cell survival. The protein is Modulator of macroautophagy TMEM150B-B of Xenopus laevis (African clawed frog).